We begin with the raw amino-acid sequence, 311 residues long: Putative ribose-phosphate pyrophosphokinase 2 (311 aa).

Residues 38–40 (DGE) and 97–98 (RQ) contribute to the ATP site. Histidine 131 and aspartate 171 together coordinate Mg(2+). Aspartate 219 contributes to the D-ribose 5-phosphate binding site.

It belongs to the ribose-phosphate pyrophosphokinase family. Class I subfamily. In terms of assembly, homohexamer. It depends on Mg(2+) as a cofactor.

It is found in the cytoplasm. It carries out the reaction D-ribose 5-phosphate + ATP = 5-phospho-alpha-D-ribose 1-diphosphate + AMP + H(+). It participates in metabolic intermediate biosynthesis; 5-phospho-alpha-D-ribose 1-diphosphate biosynthesis; 5-phospho-alpha-D-ribose 1-diphosphate from D-ribose 5-phosphate (route I): step 1/1. Its function is as follows. Involved in the biosynthesis of the central metabolite phospho-alpha-D-ribosyl-1-pyrophosphate (PRPP) via the transfer of pyrophosphoryl group from ATP to 1-hydroxyl of ribose-5-phosphate (Rib-5-P). This Listeria innocua serovar 6a (strain ATCC BAA-680 / CLIP 11262) protein is Putative ribose-phosphate pyrophosphokinase 2.